The following is a 554-amino-acid chain: Solute carrier family 22 member 22 (554 aa).

Residues 1–15 lie on the Cytoplasmic side of the membrane; the sequence is MDFDEILHHVGDSGR. The chain crosses the membrane as a helical span at residues 16 to 36; that stretch reads FQICMIILLNILSLVLSPHDV. Residues 37-144 are Extracellular-facing; that stretch reads LENFTAAIPA…DLVCDFQSFK (108 aa). A glycan (N-linked (GlcNAc...) asparagine) is linked at Asn-39. The chain crosses the membrane as a helical span at residues 145–165; that stretch reads YYAQATSLAGHLVSCPLSGII. Topologically, residues 166 to 172 are cytoplasmic; it reads SDRFGRK. The helical transmembrane segment at 173–193 threads the bilayer; that stretch reads PLLMYCSLAYGAVGTYCAFAP. Residue Asn-194 is glycosylated (N-linked (GlcNAc...) asparagine). The Extracellular portion of the chain corresponds to 194 to 199; that stretch reads NFSVYC. The helical transmembrane segment at 200 to 220 threads the bilayer; the sequence is VLRFLLSAFQSTILINSLILV. At 221–231 the chain is on the cytoplasmic side; the sequence is LEEASVQWHPT. Residues 232–252 traverse the membrane as a helical segment; that stretch reads IIVLSGLFNSIGQGVLGGLAY. The Extracellular segment spans residues 253-258; it reads VISDWH. The helical transmembrane segment at 259 to 279 threads the bilayer; the sequence is LLQLAYALPFFIFFVLFCWVP. Residues 280–347 are Cytoplasmic-facing; sequence ESVRWLIITG…DIFINPLIRK (68 aa). The chain crosses the membrane as a helical span at residues 348–368; the sequence is IVLSNSSLLFAELFSFVGLLL. Topologically, residues 369-376 are extracellular; sequence DVQLLGKN. Residues 377–397 form a helical membrane-spanning segment; it reads MFLTQIFLGAIDVPSKSLTYF. The Cytoplasmic portion of the chain corresponds to 398 to 405; the sequence is TIRNVSRR. A helical transmembrane segment spans residues 406–426; it reads PLIAFLLLTTGSCITITIFIS. Residues 427 to 434 lie on the Extracellular side of the membrane; sequence EEMYVLRT. The helical transmembrane segment at 435 to 455 threads the bilayer; sequence IIFILGKGCFAAFTCISTTYI. Over 456 to 466 the chain is Cytoplasmic; that stretch reads NELSPVELRST. The chain crosses the membrane as a helical span at residues 467–487; the sequence is LNGVFLAVVRLAGVLSALTLA. Topologically, residues 488 to 491 are extracellular; that stretch reads TRKY. The helical transmembrane segment at 492-512 threads the bilayer; it reads FVYLPMILYGVLPIVATISIL. Residues 513–554 are Cytoplasmic-facing; the sequence is FLPETFNLPHTDIIKDMEKRKRLMSKNISKKEGQDFLETTEC.

This sequence belongs to the major facilitator (TC 2.A.1) superfamily. Organic cation transporter (TC 2.A.1.19) family. As to expression, specifically expressed in kidney where it is found in proximal convoluted tubules (at protein level). Colocalizes with the prostaglandin-inactivating enzyme HPGD in kidney (at protein level). Not detected in other tissues tested.

The protein resides in the basolateral cell membrane. Sodium-independent organic anion transporter which exhibits high specificity for a subset of prostaglandins including prostaglandin E2 (PGE2), prostaglandin E1 (PGE1), prostaglandin F2-alpha (PGF2-alpha) and prostaglandin D2 (PGD2). The sequence is that of Solute carrier family 22 member 22 from Mus musculus (Mouse).